The sequence spans 390 residues: 8-amino-7-oxononanoate synthase (390 aa).

A substrate-binding site is contributed by Arg22. Residue 109–110 (GY) coordinates pyridoxal 5'-phosphate. Residue His134 participates in substrate binding. Residues Ser180, His208, and Thr236 each contribute to the pyridoxal 5'-phosphate site. Lys239 is subject to N6-(pyridoxal phosphate)lysine. Thr353 contributes to the substrate binding site.

Belongs to the class-II pyridoxal-phosphate-dependent aminotransferase family. BioF subfamily. In terms of assembly, homodimer. Requires pyridoxal 5'-phosphate as cofactor.

It catalyses the reaction 6-carboxyhexanoyl-[ACP] + L-alanine + H(+) = (8S)-8-amino-7-oxononanoate + holo-[ACP] + CO2. The protein operates within cofactor biosynthesis; biotin biosynthesis. In terms of biological role, catalyzes the decarboxylative condensation of pimeloyl-[acyl-carrier protein] and L-alanine to produce 8-amino-7-oxononanoate (AON), [acyl-carrier protein], and carbon dioxide. The chain is 8-amino-7-oxononanoate synthase from Azoarcus sp. (strain BH72).